Here is a 569-residue protein sequence, read N- to C-terminus: Glucose-6-phosphate isomerase, cytosolic 2A (569 aa).

Glu360 functions as the Proton donor in the catalytic mechanism. Active-site residues include His391 and Lys516.

This sequence belongs to the GPI family. Homodimer.

It is found in the cytoplasm. It carries out the reaction alpha-D-glucose 6-phosphate = beta-D-fructose 6-phosphate. Its pathway is carbohydrate degradation; glycolysis; D-glyceraldehyde 3-phosphate and glycerone phosphate from D-glucose: step 2/4. This chain is Glucose-6-phosphate isomerase, cytosolic 2A (PGIC2-A), found in Clarkia lewisii (Farewell-to-spring).